The primary structure comprises 397 residues: F-box protein At3g49450 (397 aa).

Residues 26-75 form the F-box domain; the sequence is GENSGTLPTDLMVEILSRVPAKSAARFRCVSNDWNSLLRSPYLTNLFLKR.

The polypeptide is F-box protein At3g49450 (Arabidopsis thaliana (Mouse-ear cress)).